The sequence spans 257 residues: Tryptophan synthase alpha chain (257 aa).

Active-site proton acceptor residues include Glu-44 and Asp-55.

The protein belongs to the TrpA family. In terms of assembly, tetramer of two alpha and two beta chains.

The enzyme catalyses (1S,2R)-1-C-(indol-3-yl)glycerol 3-phosphate + L-serine = D-glyceraldehyde 3-phosphate + L-tryptophan + H2O. Its pathway is amino-acid biosynthesis; L-tryptophan biosynthesis; L-tryptophan from chorismate: step 5/5. The alpha subunit is responsible for the aldol cleavage of indoleglycerol phosphate to indole and glyceraldehyde 3-phosphate. The sequence is that of Tryptophan synthase alpha chain from Chlamydia caviae (strain ATCC VR-813 / DSM 19441 / 03DC25 / GPIC) (Chlamydophila caviae).